Reading from the N-terminus, the 648-residue chain is Forkhead box protein N1 (648 aa).

The segment at 1 to 95 is disordered; sequence MVSLLPPQSD…PGPGSFRLSP (95 aa). The span at 38–50 shows a compositional bias: polar residues; it reads APQNKHANFSCSS. Over residues 54–67 the composition is skewed to pro residues; the sequence is DGPPERTPSLPPHS. Residues 271–367 constitute a DNA-binding region (fork-head); that stretch reads KPIYSYSILI…EELQKWKRKD (97 aa). Disordered stretches follow at residues 392-432, 457-521, and 629-648; these read LGSP…APGP, HLSP…TLLP, and SAAAGPAVYLSPGSKPLALA. A compositionally biased stretch (pro residues) spans 398-412; the sequence is GCPPPGLAGPGPIRP.

Bone marrow (at protein level). Expressed in thymus and skin.

The protein localises to the nucleus. Transcriptional regulator which regulates the development, differentiation, and function of thymic epithelial cells (TECs) both in the prenatal and postnatal thymus. Acts as a master regulator of the TECs lineage development and is required from the onset of differentiation in progenitor TECs in the developing fetus to the final differentiation steps through which TECs mature to acquire their full functionality. Regulates, either directly or indirectly the expression of a variety of genes that mediate diverse aspects of thymus development and function, including MHC Class II, DLL4, CCL25, CTSL, CD40 and PAX1. Regulates the differentiation of the immature TECs into functional cortical TECs (cTECs) and medullary TECs (mTECs). Essential for maintenance of mTECs population in the postnatal thymus. Involved in the morphogenesis and maintenance of the three-dimensional thymic microstructure which is necessary for a fully functional thymus. Plays an important role in the maintenance of hematopoiesis and particularly T lineage progenitors within the bone marrow niche with age. Essential for the vascularization of the thymus anlage. Promotes the terminal differentiation of epithelial cells in the epidermis and hair follicles, partly by negatively regulating the activity of protein kinase C. In Mus musculus (Mouse), this protein is Forkhead box protein N1 (Foxn1).